Consider the following 261-residue polypeptide: Prostatic glandular kallikrein-6 (261 aa).

Positions 1–18 are cleaved as a signal peptide; that stretch reads MWLLILFLILSLGWNDAA. Positions 19–24 are cleaved as a propeptide — activation peptide; it reads PPGQSR. A Peptidase S1 domain is found at 25–258; the sequence is IIGGFNCEKN…FTSWMKKVMK (234 aa). 5 disulfides stabilise this stretch: cysteine 31–cysteine 173, cysteine 50–cysteine 66, cysteine 152–cysteine 219, cysteine 184–cysteine 198, and cysteine 209–cysteine 234. Histidine 65 (charge relay system) is an active-site residue. N-linked (GlcNAc...) asparagine glycosylation is present at asparagine 108. Aspartate 120 serves as the catalytic Charge relay system. Serine 213 (charge relay system) is an active-site residue.

Belongs to the peptidase S1 family. Kallikrein subfamily.

It carries out the reaction Preferential cleavage of Arg-|-Xaa bonds in small molecule substrates. Highly selective action to release kallidin (lysyl-bradykinin) from kininogen involves hydrolysis of Met-|-Xaa or Leu-|-Xaa.. In terms of biological role, glandular kallikreins cleave Met-Lys and Arg-Ser bonds in kininogen to release Lys-bradykinin. The chain is Prostatic glandular kallikrein-6 (Klk6) from Rattus norvegicus (Rat).